The primary structure comprises 202 residues: NADH-quinone oxidoreductase subunit C (202 aa).

The protein belongs to the complex I 30 kDa subunit family. NDH-1 is composed of 14 different subunits. Subunits NuoB, C, D, E, F, and G constitute the peripheral sector of the complex.

It is found in the cell inner membrane. The catalysed reaction is a quinone + NADH + 5 H(+)(in) = a quinol + NAD(+) + 4 H(+)(out). NDH-1 shuttles electrons from NADH, via FMN and iron-sulfur (Fe-S) centers, to quinones in the respiratory chain. The immediate electron acceptor for the enzyme in this species is believed to be ubiquinone. Couples the redox reaction to proton translocation (for every two electrons transferred, four hydrogen ions are translocated across the cytoplasmic membrane), and thus conserves the redox energy in a proton gradient. The chain is NADH-quinone oxidoreductase subunit C from Brucella canis (strain ATCC 23365 / NCTC 10854 / RM-666).